A 513-amino-acid chain; its full sequence is ATP synthase subunit alpha (513 aa).

Glycine 169 to threonine 176 contacts ATP.

Belongs to the ATPase alpha/beta chains family. In terms of assembly, F-type ATPases have 2 components, CF(1) - the catalytic core - and CF(0) - the membrane proton channel. CF(1) has five subunits: alpha(3), beta(3), gamma(1), delta(1), epsilon(1). CF(0) has three main subunits: a(1), b(2) and c(9-12). The alpha and beta chains form an alternating ring which encloses part of the gamma chain. CF(1) is attached to CF(0) by a central stalk formed by the gamma and epsilon chains, while a peripheral stalk is formed by the delta and b chains.

It localises to the cell inner membrane. It carries out the reaction ATP + H2O + 4 H(+)(in) = ADP + phosphate + 5 H(+)(out). In terms of biological role, produces ATP from ADP in the presence of a proton gradient across the membrane. The alpha chain is a regulatory subunit. In Haemophilus influenzae (strain ATCC 51907 / DSM 11121 / KW20 / Rd), this protein is ATP synthase subunit alpha.